The sequence spans 1263 residues: DNA polymerase II large subunit (1263 aa).

A disordered region spans residues 1224–1250 (LENFNSSGNNGKKIEKKEKKAKEKPKK). Over residues 1235-1244 (KKIEKKEKKA) the composition is skewed to basic and acidic residues.

It belongs to the archaeal DNA polymerase II family. Heterodimer of a large subunit and a small subunit.

It carries out the reaction DNA(n) + a 2'-deoxyribonucleoside 5'-triphosphate = DNA(n+1) + diphosphate. It catalyses the reaction Exonucleolytic cleavage in the 3'- to 5'-direction to yield nucleoside 5'-phosphates.. In terms of biological role, possesses two activities: a DNA synthesis (polymerase) and an exonucleolytic activity that degrades single-stranded DNA in the 3'- to 5'-direction. Has a template-primer preference which is characteristic of a replicative DNA polymerase. This is DNA polymerase II large subunit (polC) from Pyrococcus furiosus (strain ATCC 43587 / DSM 3638 / JCM 8422 / Vc1).